Reading from the N-terminus, the 440-residue chain is GTPase Obg (440 aa).

The region spanning 5-163 (STFVDQTKIE…RTLRLELKVL (159 aa)) is the Obg domain. The OBG-type G domain maps to 164-338 (ADVGLVGFPS…LMSRAADLVS (175 aa)). Residues 170-177 (GFPSVGKS), 195-199 (FTTLK), 217-220 (DLPG), 288-291 (SQMD), and 319-321 (SSV) each bind GTP. 2 residues coordinate Mg(2+): Ser177 and Thr197. In terms of domain architecture, OCT spans 362 to 440 (YHRPEKMEFT…IGDFSFEFVQ (79 aa)).

The protein belongs to the TRAFAC class OBG-HflX-like GTPase superfamily. OBG GTPase family. In terms of assembly, monomer. Mg(2+) serves as cofactor.

The protein localises to the cytoplasm. Its function is as follows. An essential GTPase which binds GTP, GDP and possibly (p)ppGpp with moderate affinity, with high nucleotide exchange rates and a fairly low GTP hydrolysis rate. Plays a role in control of the cell cycle, stress response, ribosome biogenesis and in those bacteria that undergo differentiation, in morphogenesis control. This chain is GTPase Obg, found in Lactobacillus delbrueckii subsp. bulgaricus (strain ATCC 11842 / DSM 20081 / BCRC 10696 / JCM 1002 / NBRC 13953 / NCIMB 11778 / NCTC 12712 / WDCM 00102 / Lb 14).